We begin with the raw amino-acid sequence, 1260 residues long: uncharacterized protein (1260 aa).

The protein belongs to the oxoprolinase family.

This is an uncharacterized protein from Schizosaccharomyces pombe (strain 972 / ATCC 24843) (Fission yeast).